The sequence spans 568 residues: Potassium-transporting ATPase potassium-binding subunit (568 aa).

The next 10 helical transmembrane spans lie at 1 to 21 (MWLTWMEYALVLLLMTALAVP), 60 to 80 (GLALLLSNGAMLLLGYALLRA), 129 to 149 (AITFMMFAGAITGVVAAAGFI), 174 to 194 (VMLPLSFVVALVYVWQGVPQA), 251 to 271 (IHILGMLLIPSAMTYAFGSML), 278 to 298 (WVLFGACLVMFVGFLALVFTA), 381 to 401 (VGLINLLQYAILTVFLAGMMI), 420 to 440 (VMLAVMAHPISVLGFTALAAV), 488 to 508 (IGLAMLAGRYLTLLPMLALAG), and 528 to 548 (PLFMGLLVFVVVVVGGLTFLP).

It belongs to the KdpA family. The system is composed of three essential subunits: KdpA, KdpB and KdpC.

It localises to the cell inner membrane. Functionally, part of the high-affinity ATP-driven potassium transport (or Kdp) system, which catalyzes the hydrolysis of ATP coupled with the electrogenic transport of potassium into the cytoplasm. This subunit binds the periplasmic potassium ions and delivers the ions to the membrane domain of KdpB through an intramembrane tunnel. This Delftia acidovorans (strain DSM 14801 / SPH-1) protein is Potassium-transporting ATPase potassium-binding subunit.